The chain runs to 291 residues: Small ribosomal subunit protein uS2 (291 aa).

Positions 256–291 (LRGEGTAPAASEEQPAEEPAPAAAEAQTDAAVGTAV) are disordered. Low complexity predominate over residues 261–291 (TAPAASEEQPAEEPAPAAAEAQTDAAVGTAV).

The protein belongs to the universal ribosomal protein uS2 family.

This chain is Small ribosomal subunit protein uS2, found in Frankia alni (strain DSM 45986 / CECT 9034 / ACN14a).